The sequence spans 143 residues: Transcriptional regulator MraZ (143 aa).

SpoVT-AbrB domains follow at residues glutamate 5–glutamate 47 and alanine 76–arginine 119.

The protein belongs to the MraZ family. As to quaternary structure, forms oligomers.

The protein resides in the cytoplasm. The protein localises to the nucleoid. The sequence is that of Transcriptional regulator MraZ from Enterococcus faecalis (strain ATCC 700802 / V583).